A 344-amino-acid chain; its full sequence is HTH-type transcriptional repressor MelR (344 aa).

Residues 2-58 enclose the HTH lacI-type domain; sequence VRIKDIALKAKVSSATVSRILNEDESLSVAGETRQRVINIAEELGYQTVAKRRKSRG. A DNA-binding region (H-T-H motif) is located at residues 4-23; that stretch reads IKDIALKAKVSSATVSRILN.

The protein localises to the cytoplasm. Represses the melibiose operon melREDCA in the absence of melibiose or raffinose. Binds to two binding sites at the promoter region of the operon. This is HTH-type transcriptional repressor MelR from Bacillus subtilis (strain 168).